Reading from the N-terminus, the 141-residue chain is Nucleoside diphosphate kinase (141 aa).

ATP contacts are provided by Lys11, Phe59, Arg87, Thr93, Arg104, and Asn114. The active-site Pros-phosphohistidine intermediate is the His117.

The protein belongs to the NDK family. As to quaternary structure, homotetramer. It depends on Mg(2+) as a cofactor.

The protein resides in the cytoplasm. It carries out the reaction a 2'-deoxyribonucleoside 5'-diphosphate + ATP = a 2'-deoxyribonucleoside 5'-triphosphate + ADP. It catalyses the reaction a ribonucleoside 5'-diphosphate + ATP = a ribonucleoside 5'-triphosphate + ADP. Major role in the synthesis of nucleoside triphosphates other than ATP. The ATP gamma phosphate is transferred to the NDP beta phosphate via a ping-pong mechanism, using a phosphorylated active-site intermediate. The chain is Nucleoside diphosphate kinase from Pseudomonas entomophila (strain L48).